The chain runs to 600 residues: Putative dehydrogenase XoxF (600 aa).

Residues 1–21 (MKNLMNGACLALLMSGTAALA) form the signal peptide. Ca(2+) contacts are provided by Glu-192 and Asn-276. Residue Asp-318 is the Proton acceptor of the active site.

The protein belongs to the bacterial PQQ dehydrogenase family. Pyrroloquinoline quinone serves as cofactor. Ca(2+) is required as a cofactor.

The chain is Putative dehydrogenase XoxF (xoxF) from Paracoccus denitrificans.